The chain runs to 248 residues: 2,3-bisphosphoglycerate-dependent phosphoglycerate mutase (248 aa).

Substrate contacts are provided by residues 8 to 15 (RHGESTWN), 21 to 22 (TG), Arg-60, 87 to 90 (ERHY), Lys-98, 114 to 115 (RR), and 183 to 184 (GN). His-9 functions as the Tele-phosphohistidine intermediate in the catalytic mechanism. Residue Glu-87 is the Proton donor/acceptor of the active site.

The protein belongs to the phosphoglycerate mutase family. BPG-dependent PGAM subfamily. As to quaternary structure, homodimer.

It carries out the reaction (2R)-2-phosphoglycerate = (2R)-3-phosphoglycerate. It functions in the pathway carbohydrate degradation; glycolysis; pyruvate from D-glyceraldehyde 3-phosphate: step 3/5. Its function is as follows. Catalyzes the interconversion of 2-phosphoglycerate and 3-phosphoglycerate. The chain is 2,3-bisphosphoglycerate-dependent phosphoglycerate mutase from Burkholderia ambifaria (strain ATCC BAA-244 / DSM 16087 / CCUG 44356 / LMG 19182 / AMMD) (Burkholderia cepacia (strain AMMD)).